The following is a 738-amino-acid chain: 1,4-alpha-glucan branching enzyme GlgB (738 aa).

Residue Asp-399 is the Nucleophile of the active site. The active-site Proton donor is the Glu-452.

This sequence belongs to the glycosyl hydrolase 13 family. GlgB subfamily. In terms of assembly, monomer.

It carries out the reaction Transfers a segment of a (1-&gt;4)-alpha-D-glucan chain to a primary hydroxy group in a similar glucan chain.. It participates in glycan biosynthesis; glycogen biosynthesis. Functionally, catalyzes the formation of the alpha-1,6-glucosidic linkages in glycogen by scission of a 1,4-alpha-linked oligosaccharide from growing alpha-1,4-glucan chains and the subsequent attachment of the oligosaccharide to the alpha-1,6 position. This is 1,4-alpha-glucan branching enzyme GlgB from Chlamydia trachomatis serovar L2 (strain ATCC VR-902B / DSM 19102 / 434/Bu).